The chain runs to 79 residues: UPF0349 protein BCE_5075 (79 aa).

This sequence belongs to the UPF0349 family.

The chain is UPF0349 protein BCE_5075 from Bacillus cereus (strain ATCC 10987 / NRS 248).